The primary structure comprises 448 residues: Probable D-serine dehydratase (448 aa).

An N6-(pyridoxal phosphate)lysine modification is found at Lys117.

The protein belongs to the serine/threonine dehydratase family. DsdA subfamily. Pyridoxal 5'-phosphate serves as cofactor.

The catalysed reaction is D-serine = pyruvate + NH4(+). In Bacillus subtilis (strain 168), this protein is Probable D-serine dehydratase (dsdA).